Consider the following 351-residue polypeptide: MTKISKIIDELNNQQADAAWITTPLNVYYFTGYRSEPHERLFALLIKKDGKQVLFCPKMEVEEVKASPFTGEIVGYLDTENPFSLYPQTINKLLIESEHLTVARQKQLISGFNVNSFGDVDLTIKQLRNIKSEDEISKIRKAAELADKCIEIGVSYLKEGVTECEVVNHIEQTIKQYGVNEMSFDTMVLFGDHAASPHGTPGDRRLKSNEYVLFDLGVIYEHYCSDMTRTIKFGEPSKEAQEIYNIVLEAETSAIQAIKPGIPLKDIDHIARNIISEKGYGEYFPHRLGHGLGLQEHEYQDVSSTNSNLLEAGMVITIEPGIYVPGVAGVRIEDDILVTNEGYEVLTHYEK.

Aspartate 215, aspartate 226, histidine 290, glutamate 319, and glutamate 333 together coordinate Mn(2+).

Belongs to the peptidase M24B family. Mn(2+) serves as cofactor.

This is an uncharacterized protein from Staphylococcus aureus (strain USA300).